The primary structure comprises 367 residues: tRNA-specific 2-thiouridylase MnmA (367 aa).

ATP contacts are provided by residues 12-19 and Met-38; that span reads GMSGGVDS. An interaction with target base in tRNA region spans residues 98–100; it reads NPD. The Nucleophile role is filled by Cys-103. A disulfide bond links Cys-103 and Cys-200. Gly-128 provides a ligand contact to ATP. Residues 150–152 are interaction with tRNA; that stretch reads KDQ. Cys-200 functions as the Cysteine persulfide intermediate in the catalytic mechanism. The interval 312–313 is interaction with tRNA; sequence RY.

This sequence belongs to the MnmA/TRMU family. As to quaternary structure, interacts with TusE.

The protein localises to the cytoplasm. It catalyses the reaction S-sulfanyl-L-cysteinyl-[protein] + uridine(34) in tRNA + AH2 + ATP = 2-thiouridine(34) in tRNA + L-cysteinyl-[protein] + A + AMP + diphosphate + H(+). In terms of biological role, catalyzes the 2-thiolation of uridine at the wobble position (U34) of tRNA(Lys), tRNA(Glu) and tRNA(Gln), leading to the formation of s(2)U34, the first step of tRNA-mnm(5)s(2)U34 synthesis. Sulfur is provided by IscS, via a sulfur-relay system. Binds ATP and its substrate tRNAs. This Photorhabdus laumondii subsp. laumondii (strain DSM 15139 / CIP 105565 / TT01) (Photorhabdus luminescens subsp. laumondii) protein is tRNA-specific 2-thiouridylase MnmA.